Consider the following 339-residue polypeptide: Type IV secretion system protein PtlH homolog (339 aa).

This sequence belongs to the GSP E family.

This chain is Type IV secretion system protein PtlH homolog (ptlH), found in Bordetella parapertussis (strain 12822 / ATCC BAA-587 / NCTC 13253).